We begin with the raw amino-acid sequence, 143 residues long: Large ribosomal subunit protein uL11 (143 aa).

It belongs to the universal ribosomal protein uL11 family. As to quaternary structure, part of the ribosomal stalk of the 50S ribosomal subunit. Interacts with L10 and the large rRNA to form the base of the stalk. L10 forms an elongated spine to which L12 dimers bind in a sequential fashion forming a multimeric L10(L12)X complex. One or more lysine residues are methylated.

Functionally, forms part of the ribosomal stalk which helps the ribosome interact with GTP-bound translation factors. This is Large ribosomal subunit protein uL11 from Sphingopyxis alaskensis (strain DSM 13593 / LMG 18877 / RB2256) (Sphingomonas alaskensis).